The sequence spans 206 residues: Guanylate kinase (206 aa).

The region spanning 6–184 is the Guanylate kinase-like domain; the sequence is GNLFILSAPS…ALTDIETIVM (179 aa). 13–20 is a binding site for ATP; it reads APSGAGKS.

This sequence belongs to the guanylate kinase family.

It is found in the cytoplasm. The catalysed reaction is GMP + ATP = GDP + ADP. Its function is as follows. Essential for recycling GMP and indirectly, cGMP. In Pseudoalteromonas translucida (strain TAC 125), this protein is Guanylate kinase.